Consider the following 139-residue polypeptide: Putative flagella-related protein F (139 aa).

The signal sequence occupies residues Met-1–Val-18. Cys-19 carries the N-acetylcysteine modification. Residue Cys-19 is the site of S-archaeol cysteine attachment.

The protein to M.voltae FlaF.

It localises to the archaeal flagellum. The protein localises to the membrane. The sequence is that of Putative flagella-related protein F (flaF) from Methanocaldococcus jannaschii (strain ATCC 43067 / DSM 2661 / JAL-1 / JCM 10045 / NBRC 100440) (Methanococcus jannaschii).